Reading from the N-terminus, the 268-residue chain is Membrane lipoprotein TpN32 (268 aa).

The N-terminal stretch at 1 to 23 (MKGKTVSAALVGKLIALSVGVVA) is a signal peptide. Residue Cys24 is the site of N-palmitoyl cysteine attachment. Cys24 carries S-diacylglycerol cysteine lipidation.

This sequence belongs to the NlpA lipoprotein family.

It localises to the cell membrane. This Treponema pallidum (strain Nichols) protein is Membrane lipoprotein TpN32 (tpn32).